A 139-amino-acid chain; its full sequence is Putative pre-16S rRNA nuclease (139 aa).

This sequence belongs to the YqgF nuclease family.

It is found in the cytoplasm. Its function is as follows. Could be a nuclease involved in processing of the 5'-end of pre-16S rRNA. The protein is Putative pre-16S rRNA nuclease of Streptococcus pyogenes serotype M3 (strain ATCC BAA-595 / MGAS315).